Consider the following 271-residue polypeptide: Virulence regulon transcriptional activator VirF (271 aa).

An HTH araC/xylS-type domain is found at glutamate 167–threonine 265. 2 DNA-binding regions (H-T-H motif) span residues serine 184–tyrosine 205 and isoleucine 232–phenylalanine 255.

Functionally, transcriptional activator of the Yersinia virulence regulon. This Yersinia enterocolitica protein is Virulence regulon transcriptional activator VirF (virF).